The sequence spans 256 residues: Protein YIPF5 (256 aa).

At 1–125 (MSNFDNFNTD…ADGNIMNETD (125 aa)) the chain is on the cytoplasmic side. A helical transmembrane segment spans residues 126 to 146 (LAGPMVFCLAFGATLLLAGKI). Residue glutamine 147 is a topological domain, lumenal. The helical transmembrane segment at 148–168 (FGYVYGISAIGCLGMYCLLNL) threads the bilayer. The Cytoplasmic segment spans residues 169-172 (MSMT). A helical membrane pass occupies residues 173–193 (GVSFGCVSSVLGYCLLPMIIL). Over 194–195 (SS) the chain is Lumenal. Residues 196 to 216 (FAVIFSLQGILGIVLAALIIG) form a helical membrane-spanning segment. The Cytoplasmic portion of the chain corresponds to 217-235 (WCSFSASKIFISALAMDGQ). A helical membrane pass occupies residues 236-256 (QVLVAYPCALLYGVFALISVF).

It belongs to the YIP1 family.

The protein localises to the endoplasmic reticulum membrane. It is found in the golgi apparatus. The protein resides in the cis-Golgi network membrane. In terms of biological role, plays a role in transport between endoplasmic reticulum and Golgi. The sequence is that of Protein YIPF5 (yipf5) from Xenopus tropicalis (Western clawed frog).